A 479-amino-acid chain; its full sequence is Endo-beta-1,6-galactanase (479 aa).

An N-terminal signal peptide occupies residues 1 to 20; it reads MRSIVLPSLALALFSQRARA. Residue asparagine 89 is glycosylated (N-linked (GlcNAc...) asparagine). The active-site Proton donor is the glutamate 210. Residue asparagine 271 is glycosylated (N-linked (GlcNAc...) asparagine). The active-site Nucleophile is glutamate 311. Residue asparagine 358 is glycosylated (N-linked (GlcNAc...) asparagine).

It catalyses the reaction Endohydrolysis of (1-&gt;6)-beta-D-galactosidic linkages in arabinogalactan proteins and (1-&gt;3):(1-&gt;6)-beta-galactans to yield galactose and beta-(1-&gt;6)-galactaobiose as the final products.. Functionally, hydrolyzes galactooligomers with a degree of polymerization higher than 3. Hydrolyzes radish root arabinogalactan-protein. Does not hydrolyze dextran, arabinan, starch, laminarin, beta-1,4- and beta-1,3-galactans, larch wood arabinogalactan or acid-insoluble polygalacturonic acid. In Hypocrea rufa (Trichoderma viride), this protein is Endo-beta-1,6-galactanase.